The chain runs to 301 residues: Putative ribosomal RNA methyltransferase PB17E12.10c (301 aa).

4 residues coordinate S-adenosyl-L-methionine: G87, W89, D107, and D186. The active-site Proton acceptor is K247.

The protein belongs to the class I-like SAM-binding methyltransferase superfamily. RNA methyltransferase RlmE family.

The enzyme catalyses a uridine in rRNA + S-adenosyl-L-methionine = a 2'-O-methyluridine in rRNA + S-adenosyl-L-homocysteine + H(+). The chain is Putative ribosomal RNA methyltransferase PB17E12.10c from Schizosaccharomyces pombe (strain 972 / ATCC 24843) (Fission yeast).